The chain runs to 423 residues: Transducer protein Htr13 (423 aa).

The span at 1-19 (MTGPDNSLTDPSASPSTPV) shows a compositional bias: polar residues. The segment at 1-21 (MTGPDNSLTDPSASPSTPVAS) is disordered. Residues 152-388 (AVAELIERAR…ELTMMIDEAA (237 aa)) form the Methyl-accepting transducer domain.

It belongs to the methyl-accepting chemotaxis (MCP) protein family. Post-translationally, methylated by CheR.

The protein resides in the cytoplasm. Potentially involved in chemo- or phototactic signal transduction. The protein is Transducer protein Htr13 (htr13) of Halobacterium salinarum (strain ATCC 29341 / DSM 671 / R1).